We begin with the raw amino-acid sequence, 47 residues long: Large ribosomal subunit protein uL14c (47 aa).

It belongs to the universal ribosomal protein uL14 family. Part of the 50S ribosomal subunit.

The protein resides in the plastid. It localises to the chloroplast. In terms of biological role, binds to 23S rRNA. This Vigna unguiculata (Cowpea) protein is Large ribosomal subunit protein uL14c (rpl14).